Consider the following 313-residue polypeptide: Protein PALE CRESS, chloroplastic (313 aa).

Residues 1–22 constitute a chloroplast transit peptide; that stretch reads MAATSLVLTCASPLFSSPRVIS.

In terms of tissue distribution, expressed in green tissues, including leaves. Accumulates in chloroplasts of mature stomatal guard cells.

The protein localises to the plastid. It localises to the chloroplast. It is found in the chromoplast. The protein resides in the etioplast. Its subcellular location is the amyloplast. In terms of biological role, required for the differentiation of chloroplast from proplastids or etioplasts, probably by modulating some chloroplast-encoded genes expression and mRNA maturation. Involved in leaf-cells differentiation. In Arabidopsis thaliana (Mouse-ear cress), this protein is Protein PALE CRESS, chloroplastic (PAC).